The following is a 275-amino-acid chain: Monooxygenase af470 (275 aa).

It catalyses the reaction prefumagillin + NADPH + 2 O2 = fumagillin + acetaldehyde + NADP(+) + H2O. Its pathway is secondary metabolite biosynthesis; terpenoid biosynthesis. Functionally, monooxygenase; part of the gene cluster that mediates the biosynthesis of fumagillin, a meroterpenoid that has numerous biological activities including irreversible inhibition of human type 2 methionine aminopeptidase (METAP2). Within the pathway, the monooxygenase af470 catalyzes the oxidative cleavage of prefumagillin to yield the final compound of the pathway, fumagillin. The pathway begins with the conversion of farnesyl pyrophosphate (FPP) to beta-trans-bergamotene by the membrane-bound beta-trans-bergamotene synthase af520. The multifunctional cytochrome P450 monooxygenase af510 then converts beta-trans-bergamotene into 5-keto-demethoxyfumagillol via several oxydation steps. 5-keto-demethoxyfumagillol is then subjected to successive C-6 hydroxylation and O-methylation by the dioxygenase af480 and O-methyltransferase af390-400, respectively, to yield 5-keto-fumagillol, which is then stereoselectively reduced by the keto-reductase af490 to 5R-hydroxy-seco-sesquiterpene. The next step is the polyketide transferase af380-catalyzed transfer of a dodecapentaenoyl group synthesized by the polyketide synthase af370 onto 5R-hydroxy-seco-sesquiterpene which leads to the production of prefumagillin. Finally, oxidative cleavage by the monooxygenase af470 converts prefumagillin to fumagillin. The polypeptide is Monooxygenase af470 (Aspergillus fumigatus (strain ATCC MYA-4609 / CBS 101355 / FGSC A1100 / Af293) (Neosartorya fumigata)).